We begin with the raw amino-acid sequence, 210 residues long: Uracil phosphoribosyltransferase (210 aa).

Residues Arg78, Arg103, and 130–138 contribute to the 5-phospho-alpha-D-ribose 1-diphosphate site; that span reads DPMLATGGS. Uracil contacts are provided by residues Ile195 and 200–202; that span reads GDA. 5-phospho-alpha-D-ribose 1-diphosphate is bound at residue Asp201.

The protein belongs to the UPRTase family. Mg(2+) serves as cofactor.

It carries out the reaction UMP + diphosphate = 5-phospho-alpha-D-ribose 1-diphosphate + uracil. It functions in the pathway pyrimidine metabolism; UMP biosynthesis via salvage pathway; UMP from uracil: step 1/1. Its activity is regulated as follows. Allosterically activated by GTP. In terms of biological role, catalyzes the conversion of uracil and 5-phospho-alpha-D-ribose 1-diphosphate (PRPP) to UMP and diphosphate. This chain is Uracil phosphoribosyltransferase, found in Leifsonia xyli subsp. xyli (strain CTCB07).